The primary structure comprises 523 residues: Putative glucosylceramidase 1 (523 aa).

The N-terminal stretch at 1–23 is a signal peptide; sequence MKSRFLLKIFIFLAVFGVDSVRA. N-linked (GlcNAc...) asparagine glycosylation occurs at Asn168. Glu358 (nucleophile) is an active-site residue.

It belongs to the glycosyl hydrolase 30 family.

The enzyme catalyses a beta-D-glucosylceramide + H2O = an N-acyl-sphingoid base + D-glucose. It carries out the reaction a beta-D-glucosyl-(1&lt;-&gt;1')-N-acylsphing-4-enine + H2O = an N-acylsphing-4-enine + D-glucose. It catalyses the reaction an N-acyl-1-beta-D-glucosyl-15-methylhexadecasphing-4-enine + H2O = an N-acyl-15-methylhexadecasphing-4-enine + D-glucose. It participates in lipid metabolism; sphingolipid metabolism. Its function is as follows. Glucosylceramidase that catalyzes the hydrolysis of glucosylceramides into free ceramides and glucose. C.elegans contains specific sphingoid bases, which are unique or different in structure compared to the sphingoid bases found in other animals. Two examples of these distinctive compounds are: 15-methylhexadecasphinganine and 15-methylhexadecasphing-4-enine. In Caenorhabditis elegans, this protein is Putative glucosylceramidase 1 (gba-1).